The following is a 128-amino-acid chain: Histone H2A (128 aa).

Positions 1 to 22 (MSGRGKTGGKARAKAKTRSSRA) are disordered. Residue serine 2 is modified to N-acetylserine. Serine 2 carries the phosphoserine modification. At lysine 6 the chain carries N6-(2-hydroxyisobutyryl)lysine. Lysine 6 is modified (N6-acetyllysine). Positions 7–19 (TGGKARAKAKTRS) are enriched in basic residues. An N6-(2-hydroxyisobutyryl)lysine; alternate modification is found at lysine 10. Lysine 10 bears the N6-lactoyllysine; alternate mark. An N6-succinyllysine modification is found at lysine 10. Glycyl lysine isopeptide (Lys-Gly) (interchain with G-Cter in ubiquitin) cross-links involve residues lysine 14 and lysine 16. Lysine 37 carries the N6-(2-hydroxyisobutyryl)lysine; alternate modification. 2 positions are modified to N6-(2-hydroxyisobutyryl)lysine: lysine 75 and lysine 76. Lysine 96 carries the post-translational modification N6-(2-hydroxyisobutyryl)lysine; alternate. At lysine 96 the chain carries N6-succinyllysine. Lysine 96 carries the N6-glutaryllysine; alternate modification. Glutamine 105 is modified (N5-methylglutamine). The residue at position 119 (lysine 119) is an N6-(2-hydroxyisobutyryl)lysine; alternate. 3 positions are modified to N6-glutaryllysine; alternate: lysine 119, lysine 120, and lysine 126. Lysine 120 is covalently cross-linked (Glycyl lysine isopeptide (Lys-Gly) (interchain with G-Cter in ubiquitin)).

As to quaternary structure, the nucleosome is a histone octamer containing two molecules each of H2A, H2B, H3 and H4 assembled in one H3-H4 heterotetramer and two H2A-H2B heterodimers. The octamer wraps approximately 147 bp of DNA. Monoubiquitination of Lys-120 (H2AK119Ub) gives a specific tag for epigenetic transcriptional repression. Following DNA double-strand breaks (DSBs), it is ubiquitinated through 'Lys-63' linkage of ubiquitin moieties, leading to the recruitment of repair proteins to sites of DNA damage. H2AK119Ub and ionizing radiation-induced 'Lys-63'-linked ubiquitination are distinct events. Post-translationally, phosphorylation on Ser-2 is enhanced during mitosis. Phosphorylation on Ser-2 directly represses transcription. In terms of processing, glutamine methylation at Gln-105 (H2AQ104me) by FBL is specifically dedicated to polymerase I. It is present at 35S ribosomal DNA locus and impairs binding of the FACT complex. In terms of tissue distribution, expressed and secreted by skin epithelium.

Its subcellular location is the nucleus. The protein localises to the chromosome. Functionally, core component of nucleosome. Nucleosomes wrap and compact DNA into chromatin, limiting DNA accessibility to the cellular machineries which require DNA as a template. Histones thereby play a central role in transcription regulation, DNA repair, DNA replication and chromosomal stability. DNA accessibility is regulated via a complex set of post-translational modifications of histones, also called histone code, and nucleosome remodeling. The secreted form has antibacterial activity against Gram-positive bacteria and antifungal activity against S.cerevisiae. The protein is Histone H2A of Oncorhynchus mykiss (Rainbow trout).